Here is a 679-residue protein sequence, read N- to C-terminus: UvrABC system protein B (679 aa).

The region spanning 25–176 is the Helicase ATP-binding domain; it reads KGVNTGKEFQ…NLRSYLRSLV (152 aa). 38 to 45 is an ATP binding site; it reads GATGTGKT. A Beta-hairpin motif is present at residues 91 to 114; that stretch reads YYDYYQPEAYVPVSDTYIAKTASI. The region spanning 429 to 583 is the Helicase C-terminal domain; sequence QIEDLLSEIR…KKYNQVNGIT (155 aa). The UVR domain occupies 639-674; that stretch reads PDLIEKLEIKMKDAAKELNFEEAANLRDRIKKLRQK.

This sequence belongs to the UvrB family. Forms a heterotetramer with UvrA during the search for lesions. Interacts with UvrC in an incision complex.

It is found in the cytoplasm. Functionally, the UvrABC repair system catalyzes the recognition and processing of DNA lesions. A damage recognition complex composed of 2 UvrA and 2 UvrB subunits scans DNA for abnormalities. Upon binding of the UvrA(2)B(2) complex to a putative damaged site, the DNA wraps around one UvrB monomer. DNA wrap is dependent on ATP binding by UvrB and probably causes local melting of the DNA helix, facilitating insertion of UvrB beta-hairpin between the DNA strands. Then UvrB probes one DNA strand for the presence of a lesion. If a lesion is found the UvrA subunits dissociate and the UvrB-DNA preincision complex is formed. This complex is subsequently bound by UvrC and the second UvrB is released. If no lesion is found, the DNA wraps around the other UvrB subunit that will check the other stand for damage. This chain is UvrABC system protein B, found in Prochlorococcus marinus (strain MIT 9301).